The sequence spans 110 residues: PCNA-associated factor (110 aa).

A Glycyl lysine isopeptide (Lys-Gly) (interchain with G-Cter in ubiquitin) cross-link involves residue Lys15. The D-box signature appears at 23–34 (RKVLGSSTFVTN). Residue Lys24 is modified to N6-acetyllysine; alternate. Residue Lys24 forms a Glycyl lysine isopeptide (Lys-Gly) (interchain with G-Cter in ubiquitin); alternate linkage. Phosphoserine is present on Ser28. Positions 29–39 (STFVTNSSGSS) are enriched in low complexity. Positions 29–110 (STFVTNSSGS…QPDHRDDENE (82 aa)) are disordered. Residues 61 to 71 (QKGIGEFFRLS) carry the PIP-box motif. Ser71 carries the phosphoserine modification. Over residues 71–80 (SPKDSKKENQ) the composition is skewed to basic and acidic residues. A KEN box motif is present at residues 77-79 (KEN). The short motif at 84 to 96 (EAGSSGLGKAKRK) is the Initiation motif element.

In terms of assembly, interacts (when monoubiquitinated at Lys-15 and Lys-24) with PCNA. Interacts with isoform 2/p33ING1b of ING1. Interacts with BRCA1. Monoubiquitinated at Lys-15 and Lys-24 during normal S phase, promoting its association with PCNA. Also diubiquitinated at these 2 sites. Following DNA damage, monoubiquitin chains at Lys-15 and Lys-24 are probably extended, leading to disrupt the interaction with PCNA. Polyubiquitinated by the APC/C complex at the mitotic exit, leading to its degradation by the proteasome.

The protein resides in the nucleus. The protein localises to the cytoplasm. Its subcellular location is the perinuclear region. Its function is as follows. PCNA-binding protein that acts as a regulator of DNA repair during DNA replication. Following DNA damage, the interaction with PCNA is disrupted, facilitating the interaction between monoubiquitinated PCNA and the translesion DNA synthesis DNA polymerase eta (POLH) at stalled replisomes, facilitating the bypass of replication-fork-blocking lesions. Also acts as a regulator of centrosome number. In Rattus norvegicus (Rat), this protein is PCNA-associated factor.